The primary structure comprises 365 residues: Methylthioribose-1-phosphate isomerase (365 aa).

Aspartate 249 (proton donor) is an active-site residue.

The protein belongs to the eIF-2B alpha/beta/delta subunits family. MtnA subfamily.

It localises to the cytoplasm. The protein localises to the nucleus. It catalyses the reaction 5-(methylsulfanyl)-alpha-D-ribose 1-phosphate = 5-(methylsulfanyl)-D-ribulose 1-phosphate. Its pathway is amino-acid biosynthesis; L-methionine biosynthesis via salvage pathway; L-methionine from S-methyl-5-thio-alpha-D-ribose 1-phosphate: step 1/6. In terms of biological role, catalyzes the interconversion of methylthioribose-1-phosphate (MTR-1-P) into methylthioribulose-1-phosphate (MTRu-1-P). This chain is Methylthioribose-1-phosphate isomerase, found in Ostreococcus lucimarinus (strain CCE9901).